A 282-amino-acid polypeptide reads, in one-letter code: 4-diphosphocytidyl-2-C-methyl-D-erythritol kinase (282 aa).

The active site involves K9. 98 to 108 (PMGGGLGGGSS) provides a ligand contact to ATP. D140 is a catalytic residue.

This sequence belongs to the GHMP kinase family. IspE subfamily. Homodimer.

The catalysed reaction is 4-CDP-2-C-methyl-D-erythritol + ATP = 4-CDP-2-C-methyl-D-erythritol 2-phosphate + ADP + H(+). It participates in isoprenoid biosynthesis; isopentenyl diphosphate biosynthesis via DXP pathway; isopentenyl diphosphate from 1-deoxy-D-xylulose 5-phosphate: step 3/6. Catalyzes the phosphorylation of the position 2 hydroxy group of 4-diphosphocytidyl-2C-methyl-D-erythritol. In Klebsiella pneumoniae (strain 342), this protein is 4-diphosphocytidyl-2-C-methyl-D-erythritol kinase.